Consider the following 68-residue polypeptide: Protein VNG_1110C (68 aa).

This chain is Protein VNG_1110C, found in Halobacterium salinarum (strain ATCC 700922 / JCM 11081 / NRC-1) (Halobacterium halobium).